Consider the following 365-residue polypeptide: 2-aminoethylphosphonate--pyruvate transaminase (365 aa).

Lysine 194 is subject to N6-(pyridoxal phosphate)lysine.

This sequence belongs to the class-V pyridoxal-phosphate-dependent aminotransferase family. PhnW subfamily. As to quaternary structure, homodimer. Pyridoxal 5'-phosphate is required as a cofactor.

The enzyme catalyses (2-aminoethyl)phosphonate + pyruvate = phosphonoacetaldehyde + L-alanine. Its function is as follows. Involved in phosphonate degradation. In Bacillus thuringiensis (strain Al Hakam), this protein is 2-aminoethylphosphonate--pyruvate transaminase.